The primary structure comprises 258 residues: UPF0758 protein Bcep1808_2579 (258 aa).

The 123-residue stretch at 136 to 258 (PIDSPGAVED…TFSFARAGWL (123 aa)) folds into the MPN domain. Residues H207, H209, and D220 each contribute to the Zn(2+) site. Positions 207–220 (HNHPSGAVQPSAED) match the JAMM motif motif.

This sequence belongs to the UPF0758 family.

This is UPF0758 protein Bcep1808_2579 from Burkholderia vietnamiensis (strain G4 / LMG 22486) (Burkholderia cepacia (strain R1808)).